Reading from the N-terminus, the 588-residue chain is MLGDVASLAEELRVAAGQEPADLYIKNIQIVDVYTETIFSGSLVIKNGKIVAVNPGWEVEAKEVFDGKGRFAVPGFMDAHIHIEPTLLSPEALASVIVPWGTTTLFADPMEIANVAGLKGVEALLNNTENLPYQIYIEVPSRVPTAPGLETTGGVLGVKEVDQLLQSNISASLGELDPSKILSIKEEYLAKIVSARANGKVANGHAIGLNWDQLNVYATAGLSDDHESVVFQELFERLRLGIKALVREGSTERNVEALVKGAIEQNLSTENLIFCTDDKHVNDIVREGHISFNVQKAIALGLNPIKAIQMATINTAKHFRLDHYLGALTPGKVADIVLLDDLVEIKPAYVFKNGKLVAQGGKLTQQIEISQYPAFLNETVKLPPNLAPTSFALPSQGNRCKVNVINLYPDQIINFASQEWLNVAGGEVQVNTNEDILKLAVVERYGKNGSVGVGFVRGFKLKAGALASSVSHDHHNIVIVGTNDQDMDLAAREIARHQGGLVAVENGQVIGVLPLPIGGLMSSLPAEQVMSQIDQLNKKAEQLGCDLPAPFMTLSFISLPTVPELGLTDCGLIHVLEHRIIPTVVETE.

Belongs to the metallo-dependent hydrolases superfamily. Adenine deaminase family. Requires Mn(2+) as cofactor.

It catalyses the reaction adenine + H2O + H(+) = hypoxanthine + NH4(+). This chain is Adenine deaminase, found in Desulforamulus reducens (strain ATCC BAA-1160 / DSM 100696 / MI-1) (Desulfotomaculum reducens).